Here is a 264-residue protein sequence, read N- to C-terminus: MSNRWRFVVVVTLFTYCLTFERVSTWLIRSGEPVQHPAEFPFIAFLTTERTMCTGSLVSTRAVLTAGHCVCSPLPVIRVSFLTLRNGDQQGIHHQPSGVKVAPGYMPSCMSARQRRPIAQTLSGFDIAIVMLAQMVNLQSGIRVISLPQPSDIPPPGTGVFIVGYGRDDNDRDPSRKNGGILKKGRATIMECRHATNGNPICVKAGQNFGQLPAPGDSGGPLLPSLQGPVLGVVSHGVTLPNLPDIIVEYASVARMLDFVRSNI.

The N-terminal stretch at 1-19 (MSNRWRFVVVVTLFTYCLT) is a signal peptide. Positions 20 to 27 (FERVSTWL) are excised as a propeptide. The Peptidase S1 domain maps to 28 to 264 (IRSGEPVQHP…RMLDFVRSNI (237 aa)). A disulfide bridge connects residues Cys-53 and Cys-69. Residues His-68 and Asp-126 each act as charge relay system in the active site. Cysteines 192 and 202 form a disulfide. Ser-218 serves as the catalytic Charge relay system.

It belongs to the peptidase S1 family. Acetabular (penetration) glands.

Activated by an autocatalytic mechanism. In terms of biological role, this protease cleaves elastin and thus facilitates penetration of schistosome parasite larvae through elastin-rich tissue of the host. The protein is Cercarial protease of Schistosoma mansoni (Blood fluke).